Reading from the N-terminus, the 1913-residue chain is GREB1-like protein (1913 aa).

Residues 86–96 (MEDDEDEEEMS) show a composition bias toward acidic residues. 4 disordered regions span residues 86–111 (MEDD…KPAP), 281–309 (NGTS…SPRP), 1097–1157 (EAER…TSSI), and 1179–1207 (DSLD…LAWS). A compositionally biased stretch (low complexity) spans 289 to 301 (KSSSCSSTPSRPG). Over residues 1118–1157 (PQSNSSAVTGTSGSIMENGVSSSSTAGKPQQQLLTPTSSI) the composition is skewed to polar residues. A compositionally biased stretch (low complexity) spans 1187 to 1200 (SSTTSKPSSSSSSS). Residues 1832–1852 (GVFFSGLLLYLCDSFVGADLL) traverse the membrane as a helical segment.

The protein belongs to the GREB1 family. Expressed in the inner ear, with a high presence in the spiral ganglia, cochlear nerve bundles, and hair cells.

Its subcellular location is the membrane. In terms of biological role, plays a major role in early metanephros and genital development. This Mus musculus (Mouse) protein is GREB1-like protein (Greb1l).